Here is a 2182-residue protein sequence, read N- to C-terminus: Autophagy-related protein 2 (2182 aa).

Disordered regions lie at residues 291-375, 392-426, 523-630, 663-682, 736-758, and 793-816; these read SPSL…PLAD, EQDYPLGDSEDALGIPYEFSNPQDDDAEDSPATPR, YTHE…STTL, DIDPENPRASTKQQEDVATP, GAFSVHGATHAQQRSSQGTSSVE, and DKKPSPAEGSKQDTASKDAPSKET. Polar residues-rich tracts occupy residues 303–313 and 322–331; these read NPPSRQATELS and VSSSQASIRS. Residues 332-347 are compositionally biased toward basic and acidic residues; the sequence is NEPESASHHSLPENDH. 2 stretches are compositionally biased toward acidic residues: residues 528 to 540 and 613 to 624; these read AENEPAPEVEQTT and WDDDYDDPEEEP. Residues 745–758 are compositionally biased toward polar residues; sequence HAQQRSSQGTSSVE. Positions 793–813 are enriched in basic and acidic residues; that stretch reads DKKPSPAEGSKQDTASKDAPS.

It belongs to the ATG2 family. As to quaternary structure, interacts with ATG18.

The protein localises to the preautophagosomal structure membrane. Its subcellular location is the endoplasmic reticulum membrane. It catalyses the reaction a 1,2-diacyl-sn-glycero-3-phosphocholine(in) = a 1,2-diacyl-sn-glycero-3-phosphocholine(out). It carries out the reaction a 1,2-diacyl-sn-glycero-3-phospho-L-serine(in) = a 1,2-diacyl-sn-glycero-3-phospho-L-serine(out). The enzyme catalyses a 1,2-diacyl-sn-glycero-3-phosphoethanolamine(in) = a 1,2-diacyl-sn-glycero-3-phosphoethanolamine(out). In terms of biological role, lipid transfer protein required for autophagosome completion and peroxisome degradation and peroxisome degradation. Tethers the edge of the isolation membrane (IM) to the endoplasmic reticulum (ER) and mediates direct lipid transfer from ER to IM for IM expansion. ATG2 binds to the ER exit site (ERES), which is the membrane source for autophagosome formation, using basic residues in its N-terminal region (NR) and to the expanding edge of the IM through its C-terminal region. The latter binding is assisted by an ATG18-PtdIns3P interaction. ATG2 then extracts phospholipids from the membrane source using its NR and transfers them to ATG9 to the IM through its predicted beta-sheet-rich structure for membrane expansion. Autophagy is required for proper vegetative growth, asexual/sexual reproduction, and full virulence. Autophagy is particularly involved in the biosynthesis of deoxynivalenol (DON), an important virulence determinant. The polypeptide is Autophagy-related protein 2 (Gibberella zeae (strain ATCC MYA-4620 / CBS 123657 / FGSC 9075 / NRRL 31084 / PH-1) (Wheat head blight fungus)).